The primary structure comprises 102 residues: Small ribosomal subunit protein uS10 (102 aa).

Belongs to the universal ribosomal protein uS10 family. In terms of assembly, part of the 30S ribosomal subunit.

Involved in the binding of tRNA to the ribosomes. The polypeptide is Small ribosomal subunit protein uS10 (Thermococcus kodakarensis (strain ATCC BAA-918 / JCM 12380 / KOD1) (Pyrococcus kodakaraensis (strain KOD1))).